We begin with the raw amino-acid sequence, 560 residues long: Phosphoglucomutase 1 (560 aa).

Arginine 24 and serine 116 together coordinate alpha-D-glucose 1,6-bisphosphate. Serine 116 (phosphoserine intermediate) is an active-site residue. The Mg(2+) site is built by serine 116, aspartate 288, aspartate 290, and aspartate 292. Serine 116 is modified (phosphoserine). Residues aspartate 292, arginine 293, threonine 357, glutamate 376, serine 378, and lysine 389 each contribute to the alpha-D-glucose 1,6-bisphosphate site.

Belongs to the phosphohexose mutase family. As to quaternary structure, monomer. It depends on Mg(2+) as a cofactor. As to expression, localized primarily to fat bodies in third instar larvae.

The catalysed reaction is alpha-D-glucose 1-phosphate = alpha-D-glucose 6-phosphate. The enzyme catalyses O-phospho-L-seryl-[protein] + alpha-D-glucose 1-phosphate = alpha-D-glucose 1,6-bisphosphate + L-seryl-[protein]. It catalyses the reaction alpha-D-glucose 1,6-bisphosphate + L-seryl-[protein] = O-phospho-L-seryl-[protein] + alpha-D-glucose 6-phosphate. Functionally, catalyzes the reversible isomerization of alpha-D-glucose 1-phosphate to alpha-D-glucose 6-phosphate. The mechanism proceeds via the intermediate compound alpha-D-glucose 1,6-bisphosphate. This enzyme participates in both the breakdown and synthesis of glucose. Enzyme of the glycolytic pathway. Glycolysis is essential in glial cells but not in neurons; neurons rely on the citric acid cycle for their energy needs, and on lactate and alanine secreted into the hemolymph by glial cells to fuel it. The polypeptide is Phosphoglucomutase 1 (Drosophila melanogaster (Fruit fly)).